A 675-amino-acid chain; its full sequence is Potassium-transporting ATPase ATP-binding subunit (675 aa).

Helical transmembrane passes span V38–V58, L67–A87, I216–L236, and I253–I273. Catalysis depends on D304, which acts as the 4-aspartylphosphate intermediate. ATP-binding positions include D341, E345, F371–S378, and K389. Residues D512 and D516 each coordinate Mg(2+). 3 helical membrane-spanning segments follow: residues F582–M602, A610–L630, and G654–M674.

The protein belongs to the cation transport ATPase (P-type) (TC 3.A.3) family. Type IA subfamily. The system is composed of three essential subunits: KdpA, KdpB and KdpC.

The protein resides in the cell membrane. It carries out the reaction K(+)(out) + ATP + H2O = K(+)(in) + ADP + phosphate + H(+). Its function is as follows. Part of the high-affinity ATP-driven potassium transport (or Kdp) system, which catalyzes the hydrolysis of ATP coupled with the electrogenic transport of potassium into the cytoplasm. This subunit is responsible for energy coupling to the transport system and for the release of the potassium ions to the cytoplasm. The protein is Potassium-transporting ATPase ATP-binding subunit of Deinococcus radiodurans (strain ATCC 13939 / DSM 20539 / JCM 16871 / CCUG 27074 / LMG 4051 / NBRC 15346 / NCIMB 9279 / VKM B-1422 / R1).